The following is a 339-amino-acid chain: RNA 3'-terminal phosphate cyclase (339 aa).

ATP-binding positions include Asp-109 and 286–290 (HLADQ). The active-site Tele-AMP-histidine intermediate is His-310.

This sequence belongs to the RNA 3'-terminal cyclase family. Type 1 subfamily.

Its subcellular location is the cytoplasm. The enzyme catalyses a 3'-end 3'-phospho-ribonucleotide-RNA + ATP = a 3'-end 2',3'-cyclophospho-ribonucleotide-RNA + AMP + diphosphate. Catalyzes the conversion of 3'-phosphate to a 2',3'-cyclic phosphodiester at the end of RNA. The mechanism of action of the enzyme occurs in 3 steps: (A) adenylation of the enzyme by ATP; (B) transfer of adenylate to an RNA-N3'P to produce RNA-N3'PP5'A; (C) and attack of the adjacent 2'-hydroxyl on the 3'-phosphorus in the diester linkage to produce the cyclic end product. The biological role of this enzyme is unknown but it is likely to function in some aspects of cellular RNA processing. This is RNA 3'-terminal phosphate cyclase from Halobacterium salinarum (strain ATCC 29341 / DSM 671 / R1).